Reading from the N-terminus, the 346-residue chain is tRNA N6-adenosine threonylcarbamoyltransferase (346 aa).

The Fe cation site is built by H117 and H121. Substrate contacts are provided by residues 139–143 (QVSGG), D172, G185, D189, and N278. Position 308 (D308) interacts with Fe cation.

The protein belongs to the KAE1 / TsaD family. It depends on Fe(2+) as a cofactor.

It localises to the cytoplasm. The enzyme catalyses L-threonylcarbamoyladenylate + adenosine(37) in tRNA = N(6)-L-threonylcarbamoyladenosine(37) in tRNA + AMP + H(+). In terms of biological role, required for the formation of a threonylcarbamoyl group on adenosine at position 37 (t(6)A37) in tRNAs that read codons beginning with adenine. Is involved in the transfer of the threonylcarbamoyl moiety of threonylcarbamoyl-AMP (TC-AMP) to the N6 group of A37, together with TsaE and TsaB. TsaD likely plays a direct catalytic role in this reaction. In Lactobacillus delbrueckii subsp. bulgaricus (strain ATCC 11842 / DSM 20081 / BCRC 10696 / JCM 1002 / NBRC 13953 / NCIMB 11778 / NCTC 12712 / WDCM 00102 / Lb 14), this protein is tRNA N6-adenosine threonylcarbamoyltransferase.